Here is a 63-residue protein sequence, read N- to C-terminus: Small ribosomal subunit protein bS21 (63 aa).

Belongs to the bacterial ribosomal protein bS21 family.

The polypeptide is Small ribosomal subunit protein bS21 (Porphyromonas gingivalis (strain ATCC 33277 / DSM 20709 / CIP 103683 / JCM 12257 / NCTC 11834 / 2561)).